The primary structure comprises 206 residues: Superoxide dismutase [Mn] (206 aa).

Residues His27, His82, Asp168, and His172 each coordinate Mn(2+).

The protein belongs to the iron/manganese superoxide dismutase family. In terms of assembly, homodimer. The cofactor is Mn(2+).

The enzyme catalyses 2 superoxide + 2 H(+) = H2O2 + O2. Destroys superoxide anion radicals which are normally produced within the cells and which are toxic to biological systems. The sequence is that of Superoxide dismutase [Mn] (sodA) from Salmonella typhi.